We begin with the raw amino-acid sequence, 103 residues long: Large ribosomal subunit protein bL21 (103 aa).

The protein belongs to the bacterial ribosomal protein bL21 family. As to quaternary structure, part of the 50S ribosomal subunit. Contacts protein L20.

Functionally, this protein binds to 23S rRNA in the presence of protein L20. The chain is Large ribosomal subunit protein bL21 from Mycobacterium sp. (strain JLS).